The following is a 172-amino-acid chain: Dual-action ribosomal maturation protein DarP (172 aa).

This sequence belongs to the DarP family.

It is found in the cytoplasm. In terms of biological role, member of a network of 50S ribosomal subunit biogenesis factors which assembles along the 30S-50S interface, preventing incorrect 23S rRNA structures from forming. Promotes peptidyl transferase center (PTC) maturation. This Azotobacter vinelandii (strain DJ / ATCC BAA-1303) protein is Dual-action ribosomal maturation protein DarP.